Reading from the N-terminus, the 181-residue chain is Large ribosomal subunit protein uL5c (181 aa).

This sequence belongs to the universal ribosomal protein uL5 family. As to quaternary structure, part of the 50S ribosomal subunit; contacts the 5S rRNA.

The protein resides in the plastid. It localises to the chloroplast. In terms of biological role, binds 5S rRNA, forms part of the central protuberance of the 50S subunit. The chain is Large ribosomal subunit protein uL5c (rpl5) from Heterosigma akashiwo (strain NIES-293 / 8280G21-1).